The sequence spans 503 residues: Cytochrome P450 11B1, mitochondrial (503 aa).

A mitochondrion-targeting transit peptide spans 1-24 (MALRAKAEVCMAAPWLSLQRARAL). Cys450 contacts heme.

This sequence belongs to the cytochrome P450 family. It depends on heme as a cofactor.

The protein resides in the mitochondrion inner membrane. The catalysed reaction is a steroid + 2 reduced [adrenodoxin] + O2 + 2 H(+) = an 11beta-hydroxysteroid + 2 oxidized [adrenodoxin] + H2O. It catalyses the reaction 11-deoxycortisol + 2 reduced [adrenodoxin] + O2 + 2 H(+) = cortisol + 2 oxidized [adrenodoxin] + H2O. It carries out the reaction 21-hydroxyprogesterone + 2 reduced [adrenodoxin] + O2 + 2 H(+) = corticosterone + 2 oxidized [adrenodoxin] + H2O. The enzyme catalyses 21-hydroxyprogesterone + 2 reduced [adrenodoxin] + O2 + 2 H(+) = 18-hydroxy-11-deoxycorticosterone + 2 oxidized [adrenodoxin] + H2O. The catalysed reaction is 21-hydroxyprogesterone + 2 reduced [adrenodoxin] + O2 + 2 H(+) = 19-hydroxy-11-deoxycorticosterone + 2 oxidized [adrenodoxin] + H2O. It catalyses the reaction cortisol + 2 reduced [adrenodoxin] + O2 + 2 H(+) = 18-hydroxycortisol + 2 oxidized [adrenodoxin] + H2O. It carries out the reaction 11-deoxycortisol + 2 reduced [adrenodoxin] + O2 + 2 H(+) = 18-hydroxy-11-deoxycortisol + 2 oxidized [adrenodoxin] + H2O. The protein operates within steroid biosynthesis; glucocorticoid biosynthesis. It participates in steroid hormone biosynthesis. In terms of biological role, a cytochrome P450 monooxygenase involved in the biosynthesis of adrenal corticoids. Catalyzes a variety of reactions that are essential for many species, including detoxification, defense, and the formation of endogenous chemicals like steroid hormones. Steroid 11beta, 18- and 19-hydroxylase with preferred regioselectivity at 11beta, then 18, and lastly 19. Catalyzes the hydroxylation of 11-deoxycortisol and 11-deoxycorticosterone (21-hydroxyprogesterone) at 11beta position, yielding cortisol or corticosterone, respectively, but cannot produce aldosterone. Mechanistically, uses molecular oxygen inserting one oxygen atom into a substrate for hydroxylation and reducing the second into a water molecule. Two electrons are provided by NADPH via a two-protein mitochondrial transfer system comprising flavoprotein FDXR (adrenodoxin/ferredoxin reductase) and nonheme iron-sulfur protein FDX1 or FDX2 (adrenodoxin/ferredoxin). Due to its lack of 18-oxidation activity, it is incapable of generating aldosterone. Could also be involved in the androgen metabolic pathway. In Papio hamadryas ursinus (Chacma baboon), this protein is Cytochrome P450 11B1, mitochondrial (CYP11B1).